Reading from the N-terminus, the 126-residue chain is Holo-[acyl-carrier-protein] synthase (126 aa).

Residues D9 and E58 each coordinate Mg(2+).

Belongs to the P-Pant transferase superfamily. AcpS family. It depends on Mg(2+) as a cofactor.

Its subcellular location is the cytoplasm. The catalysed reaction is apo-[ACP] + CoA = holo-[ACP] + adenosine 3',5'-bisphosphate + H(+). Transfers the 4'-phosphopantetheine moiety from coenzyme A to a Ser of acyl-carrier-protein. This chain is Holo-[acyl-carrier-protein] synthase, found in Salmonella newport (strain SL254).